The sequence spans 638 residues: MVMIQIELPDGSIKEFSETTTPGDIAAGIGSGLARQAVAARFNDRMVDLCTPITESGRLEIITLNSPQGLEVYRHTAAHLMAHAVKDLYGDRVQVTIGPAVENGFYYDFYCEDHAFSPDDFEKIEKRMQELVKANLPIEREEVSRDSAIALFRELGEHYKVELIEDLDAPTVSLYRQGDFVDLCRGPHLPSTGRIKAFKLTSVAGAYWRGSEKNAMLQRIYATAFPDKKELRTYLNKLEEARKRDHRRIGRELDLFSFSEEAGAGLVIWHPKGALLRTLLEDFERREHLRRGYDIVMGPQILRTDLWKTSGHFDNYRENMYFTDVDGQGYGIKPMNCLAHMLIYKARQRSYRDLPLRYFELGTVHRHEKSGVLHGLLRVRGFTQDDAHIICTPDQLDEEIKRVLEFVRDVMAIFGFEYEIEISTRPEKSIGSDADWERATGALMNALKDLELPHDVNEGDGAFYGPKIDIKLKDALDRRWQCATIQCDFTLPERFDLTYVGKDGEKHRPVMLHRVILGAIERFIGVLIEHYAGNFPLWLAPVQAVVINVTDNQADYAKSVSDALRAAGVRVQCDLRNEKLGFKIREAQVDKIPYMLVVGDTEMSDGTVAPRFRSGKNLEPMSPEDFARFVQEECDQYR.

The TGS domain occupies 1–63 (MVMIQIELPD…TESGRLEIIT (63 aa)). Residues 245 to 536 (DHRRIGRELD…LIEHYAGNFP (292 aa)) are catalytic. C337, H388, and H513 together coordinate Zn(2+).

Belongs to the class-II aminoacyl-tRNA synthetase family. In terms of assembly, homodimer. Zn(2+) serves as cofactor.

It localises to the cytoplasm. The enzyme catalyses tRNA(Thr) + L-threonine + ATP = L-threonyl-tRNA(Thr) + AMP + diphosphate + H(+). Its function is as follows. Catalyzes the attachment of threonine to tRNA(Thr) in a two-step reaction: L-threonine is first activated by ATP to form Thr-AMP and then transferred to the acceptor end of tRNA(Thr). Also edits incorrectly charged L-seryl-tRNA(Thr). The chain is Threonine--tRNA ligase from Syntrophotalea carbinolica (strain DSM 2380 / NBRC 103641 / GraBd1) (Pelobacter carbinolicus).